The primary structure comprises 144 residues: Ribonuclease VapC1 (144 aa).

One can recognise a PINc domain in the interval 6–132 (VFVDGNVIVD…SFYSPDIEVL (127 aa)). The Mg(2+) site is built by D9 and D102.

This sequence belongs to the PINc/VapC protein family. It depends on Mg(2+) as a cofactor.

Its function is as follows. Toxic component of a type II toxin-antitoxin (TA) system. An RNase. The protein is Ribonuclease VapC1 of Aquifex aeolicus (strain VF5).